The sequence spans 250 residues: MQPLQNAGYDRAITVFSPDGRLFQVEYAREAVKRGTTSIGIKCSEGIVLAVDKRTTSNLVEATSIEKIFKIDEHIGAATSGLVADARALVERARVEAQINKITYSEPIRVDSLSKKLCDMLQMYTQNGGVRPFGSALIIGGVYDGICKLFETDPSGALIEYKATAIGSGRSAAMDIFEDQYKDDMNLNEAINLALTAINEATEHETTANNVEIAVIKCGEEVYTKLSQEEVQTFIDEVVSEEESEEESEE.

It belongs to the peptidase T1A family. As to quaternary structure, the 20S proteasome core is composed of 14 alpha and 14 beta subunits that assemble into four stacked heptameric rings, resulting in a barrel-shaped structure. The two inner rings, each composed of seven catalytic beta subunits, are sandwiched by two outer rings, each composed of seven alpha subunits. The catalytic chamber with the active sites is on the inside of the barrel. Has a gated structure, the ends of the cylinder being occluded by the N-termini of the alpha-subunits. Is capped at one or both ends by the proteasome regulatory ATPase, PAN.

Its subcellular location is the cytoplasm. The formation of the proteasomal ATPase PAN-20S proteasome complex, via the docking of the C-termini of PAN into the intersubunit pockets in the alpha-rings, triggers opening of the gate for substrate entry. Interconversion between the open-gate and close-gate conformations leads to a dynamic regulation of the 20S proteasome proteolysis activity. Component of the proteasome core, a large protease complex with broad specificity involved in protein degradation. This is Proteasome subunit alpha from Methanobrevibacter smithii (strain ATCC 35061 / DSM 861 / OCM 144 / PS).